Consider the following 39-residue polypeptide: Contryphan-Cal2 (39 aa).

Residues 1-20 (MTRTAVLLLTLLFLVAMAAS) form the signal peptide. Cys-29 and Cys-35 are joined by a disulfide.

Expressed by the venom duct.

The protein localises to the secreted. Its function is as follows. Probable neurotoxin. The sequence is that of Contryphan-Cal2 from Californiconus californicus (California cone).